A 535-amino-acid chain; its full sequence is Bifunctional purine biosynthesis protein PurH (535 aa).

The 146-residue stretch at 6-151 folds into the MGS-like domain; the sequence is TRLPVRRALI…KNHKDVAIVV (146 aa).

The protein belongs to the PurH family.

The catalysed reaction is (6R)-10-formyltetrahydrofolate + 5-amino-1-(5-phospho-beta-D-ribosyl)imidazole-4-carboxamide = 5-formamido-1-(5-phospho-D-ribosyl)imidazole-4-carboxamide + (6S)-5,6,7,8-tetrahydrofolate. It carries out the reaction IMP + H2O = 5-formamido-1-(5-phospho-D-ribosyl)imidazole-4-carboxamide. The protein operates within purine metabolism; IMP biosynthesis via de novo pathway; 5-formamido-1-(5-phospho-D-ribosyl)imidazole-4-carboxamide from 5-amino-1-(5-phospho-D-ribosyl)imidazole-4-carboxamide (10-formyl THF route): step 1/1. It participates in purine metabolism; IMP biosynthesis via de novo pathway; IMP from 5-formamido-1-(5-phospho-D-ribosyl)imidazole-4-carboxamide: step 1/1. In Ectopseudomonas mendocina (strain ymp) (Pseudomonas mendocina), this protein is Bifunctional purine biosynthesis protein PurH.